The primary structure comprises 152 residues: UPF0178 protein CKL_3490 (152 aa).

It belongs to the UPF0178 family.

The protein is UPF0178 protein CKL_3490 of Clostridium kluyveri (strain ATCC 8527 / DSM 555 / NBRC 12016 / NCIMB 10680 / K1).